A 459-amino-acid polypeptide reads, in one-letter code: Probable D-serine dehydratase (459 aa).

Residue K119 is modified to N6-(pyridoxal phosphate)lysine.

The protein belongs to the serine/threonine dehydratase family. DsdA subfamily. Pyridoxal 5'-phosphate serves as cofactor.

The enzyme catalyses D-serine = pyruvate + NH4(+). The protein is Probable D-serine dehydratase of Geobacillus stearothermophilus (Bacillus stearothermophilus).